A 128-amino-acid chain; its full sequence is Small ribosomal subunit protein eS8 (128 aa).

Belongs to the eukaryotic ribosomal protein eS8 family. In terms of assembly, part of the 30S ribosomal subunit.

This Metallosphaera sedula (strain ATCC 51363 / DSM 5348 / JCM 9185 / NBRC 15509 / TH2) protein is Small ribosomal subunit protein eS8.